The following is a 182-amino-acid chain: uncharacterized protein (182 aa).

Disordered stretches follow at residues 17–53 and 128–159; these read AVSQ…QGSK and DSLG…PKRS. Polar residues predominate over residues 42–53; that stretch reads PQPQCPSAQGSK. Over residues 129 to 138 the composition is skewed to low complexity; it reads SLGSSASSSS.

This is an uncharacterized protein from Homo sapiens (Human).